Consider the following 463-residue polypeptide: ATP-dependent protease ATPase subunit HslU (463 aa).

Residues V21, 63–68 (GVGKTE), D276, E341, and R413 each bind ATP.

This sequence belongs to the ClpX chaperone family. HslU subfamily. In terms of assembly, a double ring-shaped homohexamer of HslV is capped on each side by a ring-shaped HslU homohexamer. The assembly of the HslU/HslV complex is dependent on binding of ATP.

It is found in the cytoplasm. Its function is as follows. ATPase subunit of a proteasome-like degradation complex; this subunit has chaperone activity. The binding of ATP and its subsequent hydrolysis by HslU are essential for unfolding of protein substrates subsequently hydrolyzed by HslV. HslU recognizes the N-terminal part of its protein substrates and unfolds these before they are guided to HslV for hydrolysis. This Thermotoga petrophila (strain ATCC BAA-488 / DSM 13995 / JCM 10881 / RKU-1) protein is ATP-dependent protease ATPase subunit HslU.